The primary structure comprises 304 residues: Putative S-adenosyl-L-methionine-dependent methyltransferase MAP_4189c (304 aa).

S-adenosyl-L-methionine contacts are provided by residues Asp130 and 159-160; that span reads DL.

This sequence belongs to the UPF0677 family.

Functionally, exhibits S-adenosyl-L-methionine-dependent methyltransferase activity. The chain is Putative S-adenosyl-L-methionine-dependent methyltransferase MAP_4189c from Mycolicibacterium paratuberculosis (strain ATCC BAA-968 / K-10) (Mycobacterium paratuberculosis).